The sequence spans 81 residues: Sulfur carrier protein TusA (81 aa).

The active-site Cysteine persulfide intermediate is the cysteine 19.

Belongs to the sulfur carrier protein TusA family.

Its subcellular location is the cytoplasm. Sulfur carrier protein which probably makes part of a sulfur-relay system. In Shewanella baltica (strain OS223), this protein is Sulfur carrier protein TusA.